Reading from the N-terminus, the 618-residue chain is DNA mismatch repair protein MutL (618 aa).

Over residues 366-381 (AEPTAAREPATPRYSG) the composition is skewed to low complexity. Positions 366-403 (AEPTAAREPATPRYSGGASGGNGGRQSAGGWPHAQPGY) are disordered. Positions 382–392 (GASGGNGGRQS) are enriched in gly residues.

The protein belongs to the DNA mismatch repair MutL/HexB family.

In terms of biological role, this protein is involved in the repair of mismatches in DNA. It is required for dam-dependent methyl-directed DNA mismatch repair. May act as a 'molecular matchmaker', a protein that promotes the formation of a stable complex between two or more DNA-binding proteins in an ATP-dependent manner without itself being part of a final effector complex. In Salmonella schwarzengrund (strain CVM19633), this protein is DNA mismatch repair protein MutL.